A 129-amino-acid polypeptide reads, in one-letter code: Lysozyme C-1/C-2 (129 aa).

The 129-residue stretch at 1–129 (KVFERCELAR…VSSYVEGCTL (129 aa)) folds into the C-type lysozyme domain. 4 disulfide bridges follow: Cys6/Cys127, Cys30/Cys115, Cys65/Cys81, and Cys77/Cys95. Active-site residues include Glu35 and Asp53.

Belongs to the glycosyl hydrolase 22 family. As to quaternary structure, monomer.

The catalysed reaction is Hydrolysis of (1-&gt;4)-beta-linkages between N-acetylmuramic acid and N-acetyl-D-glucosamine residues in a peptidoglycan and between N-acetyl-D-glucosamine residues in chitodextrins.. Lysozymes have primarily a bacteriolytic function; those in tissues and body fluids are associated with the monocyte-macrophage system and enhance the activity of immunoagents. This chain is Lysozyme C-1/C-2, found in Axis axis (Axis deer).